The chain runs to 417 residues: Tryptophan synthase beta chain (417 aa).

Lysine 99 carries the N6-(pyridoxal phosphate)lysine modification.

The protein belongs to the TrpB family. In terms of assembly, tetramer of two alpha and two beta chains. Pyridoxal 5'-phosphate is required as a cofactor.

It catalyses the reaction (1S,2R)-1-C-(indol-3-yl)glycerol 3-phosphate + L-serine = D-glyceraldehyde 3-phosphate + L-tryptophan + H2O. It participates in amino-acid biosynthesis; L-tryptophan biosynthesis; L-tryptophan from chorismate: step 5/5. In terms of biological role, the beta subunit is responsible for the synthesis of L-tryptophan from indole and L-serine. This chain is Tryptophan synthase beta chain (trpB), found in Corynebacterium glutamicum (strain ATCC 13032 / DSM 20300 / JCM 1318 / BCRC 11384 / CCUG 27702 / LMG 3730 / NBRC 12168 / NCIMB 10025 / NRRL B-2784 / 534).